Reading from the N-terminus, the 367-residue chain is tRNA/tmRNA (uracil-C(5))-methyltransferase (367 aa).

S-adenosyl-L-methionine-binding residues include Gln190, Tyr218, Asn223, Glu239, and Asp299. The Nucleophile role is filled by Cys324. Glu358 serves as the catalytic Proton acceptor.

This sequence belongs to the class I-like SAM-binding methyltransferase superfamily. RNA M5U methyltransferase family. TrmA subfamily.

It carries out the reaction uridine(54) in tRNA + S-adenosyl-L-methionine = 5-methyluridine(54) in tRNA + S-adenosyl-L-homocysteine + H(+). It catalyses the reaction uridine(341) in tmRNA + S-adenosyl-L-methionine = 5-methyluridine(341) in tmRNA + S-adenosyl-L-homocysteine + H(+). Functionally, dual-specificity methyltransferase that catalyzes the formation of 5-methyluridine at position 54 (m5U54) in all tRNAs, and that of position 341 (m5U341) in tmRNA (transfer-mRNA). This chain is tRNA/tmRNA (uracil-C(5))-methyltransferase, found in Pectobacterium carotovorum subsp. carotovorum (strain PC1).